We begin with the raw amino-acid sequence, 189 residues long: Dual specificity phosphatase 21 (189 aa).

Residues 20–161 (GLSQITASLF…LIHYEFKLFS (142 aa)) enclose the Tyrosine-protein phosphatase domain. The interval 43-128 (SNNHITTIIN…YLMKYHNMTL (86 aa)) is sufficient for mitochondrial localization. The active-site Phosphocysteine intermediate is Cys-105.

It belongs to the protein-tyrosine phosphatase family. Non-receptor class dual specificity subfamily. As to quaternary structure, microtubule inner protein component of sperm flagellar doublet microtubules. As to expression, selectively expressed in testis.

Its subcellular location is the cytoplasm. It is found in the nucleus. The protein resides in the mitochondrion inner membrane. The protein localises to the cytoskeleton. It localises to the flagellum axoneme. It catalyses the reaction O-phospho-L-tyrosyl-[protein] + H2O = L-tyrosyl-[protein] + phosphate. The enzyme catalyses O-phospho-L-seryl-[protein] + H2O = L-seryl-[protein] + phosphate. It carries out the reaction O-phospho-L-threonyl-[protein] + H2O = L-threonyl-[protein] + phosphate. Functionally, protein phosphatase component of the sperm flagellar doublet microtubules. May act as a regulator of sperm motility by mediating dephosphorylation of sperm doublet microtubule proteins. Can dephosphorylate single and diphosphorylated synthetic MAPK peptides, with preference for the phosphotyrosine and diphosphorylated forms over phosphothreonine. This Mus musculus (Mouse) protein is Dual specificity phosphatase 21.